We begin with the raw amino-acid sequence, 71 residues long: Small ribosomal subunit protein bS21 (71 aa).

It belongs to the bacterial ribosomal protein bS21 family.

This is Small ribosomal subunit protein bS21 from Pseudoalteromonas atlantica (strain T6c / ATCC BAA-1087).